We begin with the raw amino-acid sequence, 81 residues long: Defensin-like protein b (81 aa).

A signal peptide spans 1 to 26 (MRNATFFIVFYVFISLVLSNVQDVTA). 4 disulfide bridges follow: cysteine 31/cysteine 81, cysteine 42/cysteine 66, cysteine 50/cysteine 76, and cysteine 64/cysteine 78.

Belongs to the DEFL family. In terms of tissue distribution, expressed in microspores and in young and mature anthers.

The protein localises to the secreted. Its function is as follows. Involved in self-incompatibility. This is Defensin-like protein b (SCRb-1) from Arabidopsis lyrata (Lyre-leaved rock-cress).